Reading from the N-terminus, the 207-residue chain is Large ribosomal subunit protein uL4 (207 aa).

The tract at residues 50-76 is disordered; sequence AVKNRSAVSGGGRKPWKQKGTGRARQG.

It belongs to the universal ribosomal protein uL4 family. As to quaternary structure, part of the 50S ribosomal subunit.

Its function is as follows. One of the primary rRNA binding proteins, this protein initially binds near the 5'-end of the 23S rRNA. It is important during the early stages of 50S assembly. It makes multiple contacts with different domains of the 23S rRNA in the assembled 50S subunit and ribosome. Forms part of the polypeptide exit tunnel. This is Large ribosomal subunit protein uL4 from Staphylococcus aureus (strain JH9).